We begin with the raw amino-acid sequence, 454 residues long: MPQAIVALVGKPNVGKSTLFNRLSLREKSIVHDLPGITRDRKYAKANLFSDLIVVDTPGLEFAAAGSLEFNMMQQSLVAINEAHIICFVVDAITGILPIDEECANLIRKHNKQSSTILVINKTEKPIILDKSYYKLGFSESVCISAKHGQGIYELGDIIQNILSEDKKINFLTTTNTKCEYNQQRPELELAIVGRPNCGKSTFINAILNEDRVLTGPQSGLTRNSVEIDWEYYGHLIRLVDTAGVRKKNAVTQSCELLSVNDTFKTIRFANIVVVMIDATRGLEQQDLSIISYAVNEGRGIVLVVNKWDLIKKKKEFQKELSRLIAYSVFQIKGINPIYISAKEKFNLESVLQQCVLTYASWQKRVTTGTLNQWLAKAMSNSPLPFQSHGKRVKIKYCTQTKARPPTIKLFCNNIESIDESYKRYLINNFKLNFDIAAGVPVRLSFVKGKNPYR.

EngA-type G domains lie at 4 to 167 (AIVA…SEDK) and 188 to 363 (LELA…ASWQ). Residues 10 to 17 (GKPNVGKS), 56 to 60 (DTPGL), 121 to 124 (NKTE), 194 to 201 (GRPNCGKS), 241 to 245 (DTAGV), and 306 to 309 (NKWD) each bind GTP. The KH-like domain occupies 364–450 (KRVTTGTLNQ…PVRLSFVKGK (87 aa)).

Belongs to the TRAFAC class TrmE-Era-EngA-EngB-Septin-like GTPase superfamily. EngA (Der) GTPase family. As to quaternary structure, associates with the 50S ribosomal subunit.

Its function is as follows. GTPase that plays an essential role in the late steps of ribosome biogenesis. This Orientia tsutsugamushi (strain Ikeda) (Rickettsia tsutsugamushi) protein is GTPase Der.